The following is a 238-amino-acid chain: Aliphatic sulfonates import ATP-binding protein SsuB (238 aa).

In terms of domain architecture, ABC transporter spans 7–221; that stretch reads VSLHQVHQQF…RPGDAAFASL (215 aa). 39–46 provides a ligand contact to ATP; that stretch reads GRSGSGKT.

This sequence belongs to the ABC transporter superfamily. Aliphatic sulfonates importer (TC 3.A.1.17.2) family. The complex is composed of two ATP-binding proteins (SsuB), two transmembrane proteins (SsuC) and a solute-binding protein (SsuA).

It is found in the cell inner membrane. It catalyses the reaction ATP + H2O + aliphatic sulfonate-[sulfonate-binding protein]Side 1 = ADP + phosphate + aliphatic sulfonateSide 2 + [sulfonate-binding protein]Side 1.. Its function is as follows. Part of the ABC transporter complex SsuABC involved in aliphatic sulfonates import. Responsible for energy coupling to the transport system. This is Aliphatic sulfonates import ATP-binding protein SsuB from Granulibacter bethesdensis (strain ATCC BAA-1260 / CGDNIH1).